A 220-amino-acid polypeptide reads, in one-letter code: Probable GTP-binding protein EngB (220 aa).

In terms of domain architecture, EngB-type G spans 41–219; sequence DRSEVCFAGR…RAEIAALAML (179 aa). GTP contacts are provided by residues 49–56, 76–80, 96–99, 164–167, and 197–200; these read GRSNVGKS, GRTRE, DLPG, TKVD, and MTSA. Positions 56 and 78 each coordinate Mg(2+).

Belongs to the TRAFAC class TrmE-Era-EngA-EngB-Septin-like GTPase superfamily. EngB GTPase family. Mg(2+) serves as cofactor.

Its function is as follows. Necessary for normal cell division and for the maintenance of normal septation. The chain is Probable GTP-binding protein EngB from Hyphomonas neptunium (strain ATCC 15444).